The chain runs to 275 residues: NH(3)-dependent NAD(+) synthetase (275 aa).

46 to 53 (GISGGQDS) is a binding site for ATP. Asp-52 is a Mg(2+) binding site. Arg-140 lines the deamido-NAD(+) pocket. Residue Thr-160 participates in ATP binding. Residue Glu-165 coordinates Mg(2+). 2 residues coordinate deamido-NAD(+): Lys-173 and Asp-180. ATP is bound by residues Lys-189 and Thr-211. Position 260–261 (260–261 (HK)) interacts with deamido-NAD(+).

Belongs to the NAD synthetase family. In terms of assembly, homodimer.

The enzyme catalyses deamido-NAD(+) + NH4(+) + ATP = AMP + diphosphate + NAD(+) + H(+). It functions in the pathway cofactor biosynthesis; NAD(+) biosynthesis; NAD(+) from deamido-NAD(+) (ammonia route): step 1/1. Its function is as follows. Catalyzes the ATP-dependent amidation of deamido-NAD to form NAD. Uses ammonia as a nitrogen source. This chain is NH(3)-dependent NAD(+) synthetase, found in Escherichia fergusonii (strain ATCC 35469 / DSM 13698 / CCUG 18766 / IAM 14443 / JCM 21226 / LMG 7866 / NBRC 102419 / NCTC 12128 / CDC 0568-73).